The following is a 272-amino-acid chain: Polar tube protein 2 (272 aa).

The N-terminal stretch at 1 to 21 (MLLLFTVVTLVSAAQVAPVTP) is a signal peptide. N134 is a glycosylation site (N-linked (GlcNAc...) asparagine). Residues 231–272 (RAIQKKEVKESSKDGEKSSTQNGEGTTDDEDGQQSPDGNGPE) are disordered. The span at 234–247 (QKKEVKESSKDGEK) shows a compositional bias: basic and acidic residues. Residues 263 to 272 (QQSPDGNGPE) are compositionally biased toward polar residues.

Its subcellular location is the spore polar tube. Involved in formation of a polar tube through which the infectious agent is passed on to the host cell. This Encephalitozoon hellem (Microsporidian parasite) protein is Polar tube protein 2 (PTP2).